Here is a 150-residue protein sequence, read N- to C-terminus: Seminal ribonuclease (150 aa).

An N-terminal signal peptide occupies residues 1-26 (MALKSLVVLPLLVLVLLLVRVQPSLG). Residues lysine 33 and arginine 36 each coordinate substrate. Histidine 38 functions as the Proton acceptor in the catalytic mechanism. 4 cysteine pairs are disulfide-bonded: cysteine 52-cysteine 110, cysteine 66-cysteine 121, cysteine 84-cysteine 136, and cysteine 91-cysteine 98. Substrate is bound by residues 67 to 71 (KPVNT) and lysine 92. Asparagine 93 is subject to Deamidated asparagine; by deterioration. Arginine 111 is a binding site for substrate. Histidine 145 functions as the Proton donor in the catalytic mechanism.

Belongs to the pancreatic ribonuclease family. In terms of assembly, homodimer; disulfide-linked. Seminal plasma. Can reach 3% of the protein content of this fluid.

It localises to the secreted. It carries out the reaction an [RNA] containing cytidine + H2O = an [RNA]-3'-cytidine-3'-phosphate + a 5'-hydroxy-ribonucleotide-3'-[RNA].. The catalysed reaction is an [RNA] containing uridine + H2O = an [RNA]-3'-uridine-3'-phosphate + a 5'-hydroxy-ribonucleotide-3'-[RNA].. Its activity is regulated as follows. Allosteric regulation by both substrate and reaction products. In terms of biological role, this enzyme hydrolyzes both single- and double-stranded RNA. In Bos taurus (Bovine), this protein is Seminal ribonuclease (SRN).